The following is a 205-amino-acid chain: Thymidylate kinase (205 aa).

10–17 is a binding site for ATP; it reads GIDGAGKS.

It belongs to the thymidylate kinase family.

It catalyses the reaction dTMP + ATP = dTDP + ADP. Phosphorylation of dTMP to form dTDP in both de novo and salvage pathways of dTTP synthesis. The chain is Thymidylate kinase from Ralstonia pickettii (strain 12J).